Reading from the N-terminus, the 134-residue chain is Phosphoribosyl-ATP pyrophosphatase 2 (134 aa).

This sequence belongs to the PRA-PH family.

It localises to the cytoplasm. It catalyses the reaction 1-(5-phospho-beta-D-ribosyl)-ATP + H2O = 1-(5-phospho-beta-D-ribosyl)-5'-AMP + diphosphate + H(+). It participates in amino-acid biosynthesis; L-histidine biosynthesis; L-histidine from 5-phospho-alpha-D-ribose 1-diphosphate: step 2/9. The chain is Phosphoribosyl-ATP pyrophosphatase 2 (hisE2) from Bradyrhizobium diazoefficiens (strain JCM 10833 / BCRC 13528 / IAM 13628 / NBRC 14792 / USDA 110).